Here is a 326-residue protein sequence, read N- to C-terminus: Transcription factor MYB16 (326 aa).

HTH myb-type domains follow at residues 9–61 (KLGL…TNYL) and 62–116 (RPDI…KKRL). DNA-binding regions (H-T-H motif) lie at residues 37 to 61 (WRSL…TNYL) and 89 to 112 (WSAI…NTHL). Disordered stretches follow at residues 197–217 (NWTT…STVS) and 280–299 (DRSF…GGDC). Over residues 208 to 217 (QLESPTSTVS) the composition is skewed to polar residues. Over residues 280 to 290 (DRSFSGDKNET) the composition is skewed to basic and acidic residues.

As to expression, expressed in trichomes, epidermis and mesophyll cells of young leaves, stems, petals, sepals, carpels and stamens.

Its subcellular location is the nucleus. Involved in the control of epidermal cell morphogenesis in petals. Promotes unidirectional cell expansion once outgrowth has been initiated. Coordinately with WIN1/SHN1, participates in the regulation of cuticle biosynthesis and wax accumulation in reproductive organs and trichomes. Functions in cuticle nanoridge formation in petals and stamens, and in morphogenesis of petal conical cells and trichomes. Functions as a major regulator of cuticle formation in vegetative organs by regulating the cuticle biosynthesis genes CYP86A8/LCR and CER1. This is Transcription factor MYB16 from Arabidopsis thaliana (Mouse-ear cress).